A 577-amino-acid chain; its full sequence is Arginine--tRNA ligase (577 aa).

A 'HIGH' region motif is present at residues 122 to 132 (PNVAKEMHVGH).

It belongs to the class-I aminoacyl-tRNA synthetase family. In terms of assembly, monomer.

The protein localises to the cytoplasm. It catalyses the reaction tRNA(Arg) + L-arginine + ATP = L-arginyl-tRNA(Arg) + AMP + diphosphate. The sequence is that of Arginine--tRNA ligase from Histophilus somni (strain 2336) (Haemophilus somnus).